The chain runs to 129 residues: MPTSMPNDPCPCGRPADYARCCGPYHAGAAAPDAETLMRARYSAHVRRDAAYLLASWHPSTRPGELSLDEGGRTTWLGLTVQRTLETGPETAEVVFLARYRIGGGSAVRMTEHSRFVRDAGRWYYLDAR.

Belongs to the UPF0225 family.

This Xanthomonas oryzae pv. oryzae (strain MAFF 311018) protein is UPF0225 protein XOO0258.